The chain runs to 206 residues: MFDIGWTELLVIAVVLIVVVGPKDLPPMLRAFGKMTQRARKVAGEFRAQFDEALREAELDDVRQTISDAQKLNPVSSLREAMNPLRQMGNEIKADLQKATAVTENKTEVPSAAMSAPTPSMSLPETPPVVPTPAPAPEPAAVAAETVAAKPKAPRKPRAKAADKAAFAIAAPVENPPAEKPKRTTAARKPAAPKTPVQTKKKKDEA.

A helical transmembrane segment spans residues methionine 1 to glycine 21. The disordered stretch occupies residues glutamate 104 to alanine 206. Low complexity predominate over residues proline 110–proline 124. Positions glutamate 125–glutamate 138 are enriched in pro residues. Composition is skewed to low complexity over residues proline 139–proline 151 and alanine 187–proline 196.

The protein belongs to the TatB family. As to quaternary structure, the Tat system comprises two distinct complexes: a TatABC complex, containing multiple copies of TatA, TatB and TatC subunits, and a separate TatA complex, containing only TatA subunits. Substrates initially bind to the TatABC complex, which probably triggers association of the separate TatA complex to form the active translocon.

It localises to the cell inner membrane. Functionally, part of the twin-arginine translocation (Tat) system that transports large folded proteins containing a characteristic twin-arginine motif in their signal peptide across membranes. Together with TatC, TatB is part of a receptor directly interacting with Tat signal peptides. TatB may form an oligomeric binding site that transiently accommodates folded Tat precursor proteins before their translocation. The chain is Sec-independent protein translocase protein TatB from Rhizobium etli (strain ATCC 51251 / DSM 11541 / JCM 21823 / NBRC 15573 / CFN 42).